Here is a 373-residue protein sequence, read N- to C-terminus: 3-isopropylmalate dehydrogenase (373 aa).

82 to 93 (GPKWGTGTVRPE) serves as a coordination point for NAD(+). Substrate contacts are provided by R100, R110, R139, and D231. Residues D231, D256, and D260 each contribute to the Mg(2+) site. Position 295-306 (295-306 (GSAPDLPANKVN)) interacts with NAD(+).

The protein belongs to the isocitrate and isopropylmalate dehydrogenases family. As to quaternary structure, homodimer. It depends on Mg(2+) as a cofactor. Mn(2+) serves as cofactor.

The protein localises to the cytoplasm. It catalyses the reaction (2R,3S)-3-isopropylmalate + NAD(+) = 4-methyl-2-oxopentanoate + CO2 + NADH. It functions in the pathway amino-acid biosynthesis; L-leucine biosynthesis; L-leucine from 3-methyl-2-oxobutanoate: step 3/4. Catalyzes the oxidation of 3-carboxy-2-hydroxy-4-methylpentanoate (3-isopropylmalate) to 3-carboxy-4-methyl-2-oxopentanoate. The product decarboxylates to 4-methyl-2 oxopentanoate. This chain is 3-isopropylmalate dehydrogenase (LEU2), found in Candida albicans (Yeast).